The following is a 197-amino-acid chain: Cytochrome c oxidase polypeptide 5, mitochondrial (197 aa).

The N-terminal 13 residues, 1–13 (MFLRSVTRAAARS), are a transit peptide targeting the mitochondrion. Residues 14 to 129 (SAVPTTGLRS…KGENLKIFFK (116 aa)) lie on the Mitochondrial matrix side of the membrane. The chain crosses the membrane as a helical span at residues 130 to 147 (VAQLTLVSFGIFYVIHLF). The Mitochondrial intermembrane segment spans residues 148-197 (AKPQPKTMTKEWQEASNEYAKQEKINPIYGISAEGYEGKGFVQSPPAEKQ).

This sequence belongs to the cytochrome c oxidase IV family. As to quaternary structure, component of the cytochrome c oxidase (complex IV, CIV), a multisubunit enzyme composed of a catalytic core of 3 subunits and seevral supernumerary subunits. The complex exists as a monomer or a dimer and forms supercomplexes (SCs) in the inner mitochondrial membrane with ubiquinol-cytochrome c oxidoreductase (cytochrome b-c1 complex, complex III, CIII).

The protein resides in the mitochondrion inner membrane. It participates in energy metabolism; oxidative phosphorylation. In terms of biological role, component of the cytochrome c oxidase, the last enzyme in the mitochondrial electron transport chain which drives oxidative phosphorylation. The respiratory chain contains 3 multisubunit complexes succinate dehydrogenase (complex II, CII), ubiquinol-cytochrome c oxidoreductase (cytochrome b-c1 complex, complex III, CIII) and cytochrome c oxidase (complex IV, CIV), that cooperate to transfer electrons derived from NADH and succinate to molecular oxygen, creating an electrochemical gradient over the inner membrane that drives transmembrane transport and the ATP synthase. Cytochrome c oxidase is the component of the respiratory chain that catalyzes the reduction of oxygen to water. Electrons originating from reduced cytochrome c in the intermembrane space (IMS) are transferred via the dinuclear copper A center (CU(A)) of subunit 2 and heme A of subunit 1 to the active site in subunit 1, a binuclear center (BNC) formed by heme A3 and copper B (CU(B)). The BNC reduces molecular oxygen to 2 water molecules using 4 electrons from cytochrome c in the IMS and 4 protons from the mitochondrial matrix. This Aspergillus niger protein is Cytochrome c oxidase polypeptide 5, mitochondrial (cox5).